The sequence spans 151 residues: 3-hydroxyacyl-[acyl-carrier-protein] dehydratase FabZ (151 aa).

His54 is an active-site residue.

Belongs to the thioester dehydratase family. FabZ subfamily.

Its subcellular location is the cytoplasm. The catalysed reaction is a (3R)-hydroxyacyl-[ACP] = a (2E)-enoyl-[ACP] + H2O. Functionally, involved in unsaturated fatty acids biosynthesis. Catalyzes the dehydration of short chain beta-hydroxyacyl-ACPs and long chain saturated and unsaturated beta-hydroxyacyl-ACPs. This is 3-hydroxyacyl-[acyl-carrier-protein] dehydratase FabZ from Salmonella agona (strain SL483).